The sequence spans 138 residues: Cytosolic calcium-binding protein 2 (138 aa).

The segment covering T31 to V41 has biased composition (low complexity). Residues T31 to Q122 are disordered. 6 repeat units span residues V62–K68, E71–K75, V92–K98, V109–K114, V118–Q122, and V131–K135. Residues V62 to K135 are 6 X 5 AA approximate repeats of V-E-E-K-K. The segment covering E64–V85 has biased composition (basic and acidic residues). A compositionally biased stretch (basic and acidic residues) spans E110–Q122.

Predominantly expressed in roots (e.g. in endodermis in the stele) and stems, to a lower extent in shoots, flowers and siliques, and, at low levels, in leaves.

The protein resides in the cytoplasm. It is found in the cytosol. In terms of biological role, binds calcium Ca(2+) and may act as a signal mediator to buffer Ca(2+). The sequence is that of Cytosolic calcium-binding protein 2 from Arabidopsis thaliana (Mouse-ear cress).